Reading from the N-terminus, the 156-residue chain is Small ribosomal subunit protein uS7 (156 aa).

This sequence belongs to the universal ribosomal protein uS7 family. In terms of assembly, part of the 30S ribosomal subunit. Contacts proteins S9 and S11.

Functionally, one of the primary rRNA binding proteins, it binds directly to 16S rRNA where it nucleates assembly of the head domain of the 30S subunit. Is located at the subunit interface close to the decoding center, probably blocks exit of the E-site tRNA. This is Small ribosomal subunit protein uS7 from Cupriavidus metallidurans (strain ATCC 43123 / DSM 2839 / NBRC 102507 / CH34) (Ralstonia metallidurans).